Consider the following 300-residue polypeptide: Inositol polyphosphate multikinase beta (300 aa).

Ser78 is subject to Phosphoserine.

The protein belongs to the inositol phosphokinase (IPK) family. As to quaternary structure, interacts with KIN10 and KIN11. Post-translationally, phosphorylated by KIN10. Expressed in leaves, stems, roots, siliques and flowers. Detected in vascular strands, stigma cells, the abscission zones of fully elongated siliques, the root central cylinder and the root tip.

It localises to the nucleus. The enzyme catalyses 1D-myo-inositol 1,4,5-trisphosphate + 2 ATP = 1D-myo-inositol 1,3,4,5,6-pentakisphosphate + 2 ADP + 2 H(+). It carries out the reaction 1D-myo-inositol 1,3,4,6-tetrakisphosphate + ATP = 1D-myo-inositol 1,3,4,5,6-pentakisphosphate + ADP + H(+). Its activity is regulated as follows. Down-regulated by KIN10 through its protein phosphorylation. Functionally, inositol phosphate kinase with a broad substrate specificity. Phosphorylates inositol 1,4,5-trisphosphate (Ins(1,4,5)P3), inositol 1,4,5,6-tetrakisphosphate (Ins(1,4,5,6)P4), inositol 1,3,4,5-tetrakisphosphate (Ins(1,3,4,5)P4), inositol 1,3,4,6-tetrakisphosphate (Ins(1,3,4,6)P4) and inositol 1,2,3,4,6-pentakisphosphate (Ins(1,2,3,4,6)P5) but not inositol 1,4-bisphosphate (Ins(1,4)P2), inositol 1,3,4-trisphosphate (Ins(1,3,4)P3), inositol 1,2,6-trisphosphate (Ins(1,2,6)P3), inositol 3,4,5,6-tetrakisphosphate (Ins(3,4,5,6)P4), inositol 1,3,4,5,6-pentakisphosphate (Ins(1,3,4,5,6)P5), inositol 1,2,4,5,6-pentakisphosphate (Ins(1,2,4,5,6)P5) or inositol hexakisphosphate (InsP6). Involved in the auxin signaling pathway. Regulates axillary shoot branching and is required for phytate synthesis in seeds. The protein is Inositol polyphosphate multikinase beta (IPK2b) of Arabidopsis thaliana (Mouse-ear cress).